A 485-amino-acid polypeptide reads, in one-letter code: Argininosuccinate lyase (485 aa).

The protein belongs to the lyase 1 family. Argininosuccinate lyase subfamily.

It localises to the cytoplasm. It carries out the reaction 2-(N(omega)-L-arginino)succinate = fumarate + L-arginine. The protein operates within amino-acid biosynthesis; L-arginine biosynthesis; L-arginine from L-ornithine and carbamoyl phosphate: step 3/3. This chain is Argininosuccinate lyase, found in Nitrosopumilus maritimus (strain SCM1).